Consider the following 163-residue polypeptide: Transcription elongation factor GreB (163 aa).

Residues Gly54–Val76 adopt a coiled-coil conformation.

It belongs to the GreA/GreB family. GreB subfamily.

Functionally, necessary for efficient RNA polymerase transcription elongation past template-encoded arresting sites. The arresting sites in DNA have the property of trapping a certain fraction of elongating RNA polymerases that pass through, resulting in locked ternary complexes. Cleavage of the nascent transcript by cleavage factors such as GreA or GreB allows the resumption of elongation from the new 3'terminus. GreB releases sequences of up to 9 nucleotides in length. The chain is Transcription elongation factor GreB from Neisseria meningitidis serogroup A / serotype 4A (strain DSM 15465 / Z2491).